Here is a 257-residue protein sequence, read N- to C-terminus: 1-(5-phosphoribosyl)-5-[(5-phosphoribosylamino)methylideneamino] imidazole-4-carboxamide isomerase (257 aa).

The protein belongs to the HisA/HisF family.

It localises to the cytoplasm. The enzyme catalyses 1-(5-phospho-beta-D-ribosyl)-5-[(5-phospho-beta-D-ribosylamino)methylideneamino]imidazole-4-carboxamide = 5-[(5-phospho-1-deoxy-D-ribulos-1-ylimino)methylamino]-1-(5-phospho-beta-D-ribosyl)imidazole-4-carboxamide. It functions in the pathway amino-acid biosynthesis; L-histidine biosynthesis; L-histidine from 5-phospho-alpha-D-ribose 1-diphosphate: step 4/9. This chain is 1-(5-phosphoribosyl)-5-[(5-phosphoribosylamino)methylideneamino] imidazole-4-carboxamide isomerase (his-7), found in Neurospora crassa (strain ATCC 24698 / 74-OR23-1A / CBS 708.71 / DSM 1257 / FGSC 987).